We begin with the raw amino-acid sequence, 559 residues long: Probable alpha-(1-&gt;6)-mannopyranosyltransferase MSMEG_3120/MSMEI_3041 (559 aa).

12 helical membrane-spanning segments follow: residues 41 to 61, 81 to 101, 202 to 222, 247 to 267, 300 to 316, 321 to 340, 355 to 375, 386 to 406, 419 to 439, 455 to 475, 480 to 500, and 507 to 527; these read FGAT…ARPV, VSLT…LMLG, IVEA…LIVW, LLFM…GLML, WQPM…IAMS, LPSL…RWGG, ISLA…GWLF, WMSP…LLGL, AIGV…VLRG, VLLF…PLAA, PGFR…GPTA, and LFQI…LIAL. Pro residues predominate over residues 535–548; that stretch reads RPAPEPPARPPEQP. Residues 535-559 form a disordered region; sequence RPAPEPPARPPEQPAPADDAYAESP.

Belongs to the MptA/B family.

The protein localises to the membrane. Its function is as follows. Catalyzes the addition of alpha-(1-&gt;6)-mannose residue. In Mycolicibacterium smegmatis (strain ATCC 700084 / mc(2)155) (Mycobacterium smegmatis), this protein is Probable alpha-(1-&gt;6)-mannopyranosyltransferase MSMEG_3120/MSMEI_3041.